We begin with the raw amino-acid sequence, 70 residues long: Conotoxin Im11.11 (70 aa).

A signal peptide spans 1–25; that stretch reads MFRLTSVGCILLVIAFLNLVGLTNA. 4 disulfides stabilise this stretch: Cys26-Cys40, Cys33-Cys45, Cys39-Cys49, and Cys44-Cys53. Pro56 bears the Proline amide mark. Positions 60 to 70 are excised as a propeptide; that stretch reads TRLQGFFKHRR.

It belongs to the conotoxin I2 superfamily. In terms of tissue distribution, expressed by the venom duct.

It is found in the secreted. Functionally, probable neurotoxin. The protein is Conotoxin Im11.11 of Conus imperialis (Imperial cone).